The primary structure comprises 130 residues: Small ribosomal subunit protein uS9 (130 aa).

This sequence belongs to the universal ribosomal protein uS9 family.

This chain is Small ribosomal subunit protein uS9, found in Polaromonas sp. (strain JS666 / ATCC BAA-500).